We begin with the raw amino-acid sequence, 258 residues long: Phosphate import ATP-binding protein PstB (258 aa).

Positions isoleucine 12–isoleucine 253 constitute an ABC transporter domain. Glycine 44–serine 51 contributes to the ATP binding site.

Belongs to the ABC transporter superfamily. Phosphate importer (TC 3.A.1.7) family. The complex is composed of two ATP-binding proteins (PstB), two transmembrane proteins (PstC and PstA) and a solute-binding protein (PstS).

The protein localises to the cell inner membrane. The catalysed reaction is phosphate(out) + ATP + H2O = ADP + 2 phosphate(in) + H(+). Part of the ABC transporter complex PstSACB involved in phosphate import. Responsible for energy coupling to the transport system. The chain is Phosphate import ATP-binding protein PstB from Photorhabdus laumondii subsp. laumondii (strain DSM 15139 / CIP 105565 / TT01) (Photorhabdus luminescens subsp. laumondii).